The chain runs to 1877 residues: Transmembrane protein 131 (1877 aa).

The N-terminal stretch at 1–20 is a signal peptide; sequence MGKRAGGAAAAAAAASTSSA. Over 21-1115 the chain is Lumenal; that stretch reads AGLEPAAGRG…AEALPRPNWE (1095 aa). The tract at residues 107–281 is papD-L domain; sequence RFEPPMLDFH…ETKGVMRASF (175 aa). The chain crosses the membrane as a helical span at residues 1116-1136; it reads LALYIIISGVMSALFLLVIGT. Residues 1137–1877 are Cytoplasmic-facing; it reads AYLEAQGIWE…WSNSHFPHEN (741 aa). Polar residues predominate over residues 1197–1227; that stretch reads NASSRPGTGSHRQCGTSVHPHSSHGSKNSAD. Disordered stretches follow at residues 1197–1573, 1590–1655, 1679–1707, and 1830–1852; these read NASS…SSST, LKQR…NPTF, SDFSSSLGISHIPVDSDGSDSSGLWSPVS, and NSAAAHTPSASGPADDLGQTYNP. The segment covering 1233 to 1258 has biased composition (low complexity); sequence TRNSSSMSSRTSPQAAASQSTSKTSP. The span at 1301 to 1311 shows a compositional bias: pro residues; the sequence is QPPPPVPQHQE. Phosphoserine is present on residues serine 1318 and serine 1338. Basic and acidic residues-rich tracts occupy residues 1326 to 1339 and 1349 to 1360; these read SHPERASTTRHSSE and AMDKDFDHHDSS. At serine 1371 the chain carries Phosphoserine. Residues 1376–1391 are compositionally biased toward basic residues; that stretch reads SKGKGKSLQQRKAKPP. A compositionally biased stretch (basic and acidic residues) spans 1392–1414; it reads KKQEEKEKRGKGKPQEDELKDAL. The segment covering 1420–1432 has biased composition (low complexity); it reads SSTTTETSNPDTE. Composition is skewed to polar residues over residues 1507 to 1523 and 1538 to 1550; these read TLASGSKSRNPPKTKGT and LPSSQELGNTSSS. Residues 1599 to 1608 show a composition bias toward pro residues; the sequence is PASPSLPTAP. Residues 1609 to 1646 are compositionally biased toward low complexity; it reads CPFTSRGSYSSVVNSSGSDTKAKQTSSSKSKLTKAASL. Positions 1830–1839 are enriched in polar residues; the sequence is NSAAAHTPSA. Residues serine 1857 and serine 1865 each carry the phosphoserine modification.

The protein belongs to the TMEM131 family. Interacts (via PapD-L domain) with COL1A2 (via C-terminus); the interaction is direct, may occur with other collagen proteins, and is involved in assembly and TRAPPIII ER-to-Golgi transport complex-dependent secretion of collagen. Interacts (via C-terminus) with TRAPPC8 (via C-terminus); the interaction is direct.

Its subcellular location is the membrane. Its function is as follows. Collagen binding transmembrane protein involved in collagen secretion by recruiting the ER-to-Golgi transport complex TRAPPIII. May play a role in the immune response to viral infection. In Mus musculus (Mouse), this protein is Transmembrane protein 131.